We begin with the raw amino-acid sequence, 365 residues long: Histidinol-phosphate aminotransferase (365 aa).

The tract at residues 1–22 (MSRPVPNPGILDIAPYTPGKSP) is disordered. Residue Lys221 is modified to N6-(pyridoxal phosphate)lysine.

It belongs to the class-II pyridoxal-phosphate-dependent aminotransferase family. Histidinol-phosphate aminotransferase subfamily. In terms of assembly, homodimer. The cofactor is pyridoxal 5'-phosphate.

The catalysed reaction is L-histidinol phosphate + 2-oxoglutarate = 3-(imidazol-4-yl)-2-oxopropyl phosphate + L-glutamate. It functions in the pathway amino-acid biosynthesis; L-histidine biosynthesis; L-histidine from 5-phospho-alpha-D-ribose 1-diphosphate: step 7/9. This chain is Histidinol-phosphate aminotransferase, found in Rhodopseudomonas palustris (strain BisB5).